A 373-amino-acid polypeptide reads, in one-letter code: Peptide chain release factor 1-like, mitochondrial (373 aa).

The transit peptide at 1–13 directs the protein to the mitochondrion; that stretch reads MRSGFLRSARRLW. Residues 56 to 111 are a coiled coil; it reads QLAAAARLLNEKERELRDTESLLHDENEDLKKLAESEIALCQKEIAELKHRIISLL. The segment at 229–293 is GGQ domain; the sequence is PKDLRIDTKR…LRARLYSMRL (65 aa). Positions 243-245 match the GGQ motif; sequence GGQ. At Q245 the chain carries N5-methylglutamine.

The protein belongs to the prokaryotic/mitochondrial release factor family. Post-translationally, methylation of glutamine in the GGQ triplet by HEMK1 is conserved from bacteria to mammals.

Its subcellular location is the mitochondrion. Functionally, mitochondrial peptide chain release factor that directs the termination of translation in response to the peptide chain termination codons UAA and UAG. The sequence is that of Peptide chain release factor 1-like, mitochondrial (Mtrf1l) from Rattus norvegicus (Rat).